The sequence spans 597 residues: Protein disulfide isomerase-like 1-4 (597 aa).

Positions methionine 1–alanine 25 are cleaved as a signal peptide. Acidic residues-rich tracts occupy residues leucine 37–proline 49 and aspartate 61–phenylalanine 84. A disordered region spans residues leucine 37 to aspartate 101. Residues serine 85–glycine 208 enclose the Thioredoxin 1 domain. The N-linked (GlcNAc...) asparagine glycan is linked to asparagine 112. Residues cysteine 132 and cysteine 135 each act as nucleophile in the active site. A disulfide bridge connects residues cysteine 132 and cysteine 135. N-linked (GlcNAc...) asparagine glycosylation is found at asparagine 213 and asparagine 342. One can recognise a Thioredoxin 2 domain in the interval phenylalanine 429–threonine 550. Catalysis depends on nucleophile residues cysteine 471 and cysteine 474. Cysteine 471 and cysteine 474 are disulfide-bonded. Residue asparagine 524 is glycosylated (N-linked (GlcNAc...) asparagine). Residues leucine 555 to leucine 597 form a disordered region. Over residues serine 560–valine 573 the composition is skewed to polar residues. The Prevents secretion from ER motif lies at lysine 594–leucine 597.

This sequence belongs to the protein disulfide isomerase family. Interacts with MEE8 and MED37A. Expressed in germinating seedling, including the cotyledons and hypocotyl, in vascular tissues, in pollen grains, root tips, leaf trichomes, developing seeds and siliques.

It localises to the endoplasmic reticulum lumen. Its subcellular location is the golgi apparatus. It is found in the vacuole. The protein resides in the nucleus. The protein localises to the secreted. It localises to the cell wall. The enzyme catalyses Catalyzes the rearrangement of -S-S- bonds in proteins.. Functionally, acts as a protein-folding catalyst that interacts with nascent polypeptides to catalyze the formation, isomerization, and reduction or oxidation of disulfide bonds. This is Protein disulfide isomerase-like 1-4 (PDIL1-4) from Arabidopsis thaliana (Mouse-ear cress).